The chain runs to 392 residues: ATP phosphoribosyltransferase regulatory subunit (392 aa).

This sequence belongs to the class-II aminoacyl-tRNA synthetase family. HisZ subfamily. In terms of assembly, heteromultimer composed of HisG and HisZ subunits.

Its subcellular location is the cytoplasm. The protein operates within amino-acid biosynthesis; L-histidine biosynthesis; L-histidine from 5-phospho-alpha-D-ribose 1-diphosphate: step 1/9. Its function is as follows. Required for the first step of histidine biosynthesis. May allow the feedback regulation of ATP phosphoribosyltransferase activity by histidine. This is ATP phosphoribosyltransferase regulatory subunit from Prochlorococcus marinus (strain MIT 9303).